Reading from the N-terminus, the 440-residue chain is Chromosome partition protein MukF (440 aa).

The leucine-zipper stretch occupies residues 208 to 236 (LSETSGTLRELQDTLEAAGDKLQANLLRI).

The protein belongs to the MukF family. In terms of assembly, interacts, and probably forms a ternary complex, with MukE and MukB via its C-terminal region. The complex formation is stimulated by calcium or magnesium. It is required for an interaction between MukE and MukB.

It localises to the cytoplasm. It is found in the nucleoid. Functionally, involved in chromosome condensation, segregation and cell cycle progression. May participate in facilitating chromosome segregation by condensation DNA from both sides of a centrally located replisome during cell division. Not required for mini-F plasmid partitioning. Probably acts via its interaction with MukB and MukE. Overexpression results in anucleate cells. It has a calcium binding activity. In Escherichia fergusonii (strain ATCC 35469 / DSM 13698 / CCUG 18766 / IAM 14443 / JCM 21226 / LMG 7866 / NBRC 102419 / NCTC 12128 / CDC 0568-73), this protein is Chromosome partition protein MukF.